The sequence spans 307 residues: 4-hydroxythreonine-4-phosphate dehydrogenase (307 aa).

Substrate-binding residues include H126 and T127. Positions 156, 195, and 251 each coordinate a divalent metal cation. K259, N268, and R277 together coordinate substrate.

The protein belongs to the PdxA family. As to quaternary structure, homodimer. It depends on Zn(2+) as a cofactor. The cofactor is Mg(2+). Requires Co(2+) as cofactor.

It localises to the cytoplasm. The catalysed reaction is 4-(phosphooxy)-L-threonine + NAD(+) = 3-amino-2-oxopropyl phosphate + CO2 + NADH. The protein operates within cofactor biosynthesis; pyridoxine 5'-phosphate biosynthesis; pyridoxine 5'-phosphate from D-erythrose 4-phosphate: step 4/5. Catalyzes the NAD(P)-dependent oxidation of 4-(phosphooxy)-L-threonine (HTP) into 2-amino-3-oxo-4-(phosphooxy)butyric acid which spontaneously decarboxylates to form 3-amino-2-oxopropyl phosphate (AHAP). The sequence is that of 4-hydroxythreonine-4-phosphate dehydrogenase from Helicobacter pylori (strain ATCC 700392 / 26695) (Campylobacter pylori).